A 594-amino-acid polypeptide reads, in one-letter code: Interactor of HORMAD1 protein 1 (594 aa).

Coiled-coil stretches lie at residues 109-135 (VGKSKGLLEQFEEKKKRAKDKCDSETL), 165-189 (QSILDSLETVAKTLQETIQAQNDLV), and 219-245 (EMKSNLKHLEVLVAQQSQEFQQLCEQL). The segment covering 434-443 (VEMRGKDKKQ) has biased composition (basic and acidic residues). A disordered region spans residues 434 to 454 (VEMRGKDKKQQPRKAHRAHRG). Residues 444–454 (QPRKAHRAHRG) show a composition bias toward basic residues. A phosphoserine mark is found at Ser-588 and Ser-589.

As to quaternary structure, part of the MCD recombinosome complex, at least composed of IHO1, REC114 and MEI4. Interacts with REC114. Interacts with MEI4. Interacts with HORMAD1. Interacts with ANKRD31.

The protein resides in the chromosome. Required for DNA double-strand breaks (DSBs) formation in unsynapsed regions during meiotic recombination. Probably acts by forming a complex with MEI4 and REC114, which activates DSBs formation in unsynapsed regions, an essential step to ensure completion of synapsis. Not required for HORMAD1 functions in pairing-independent synaptonemal complex formation, ATR recruitment to unsynapsed axes, meiotic silencing of unsynapsed chromatin (MSUC) or meiotic surveillance. The polypeptide is Interactor of HORMAD1 protein 1 (Homo sapiens (Human)).